A 571-amino-acid polypeptide reads, in one-letter code: MSNKKTFKKYSRVAGLLTVALIIGNLVTANAESNKQNTASTETTTTNEQPKPESSELTIEKAGQKMDDMLNSNDMIKLAPKEMPLESAEKEEKKSEDKKKSEEDHTEEINDKIYSLNYNELEVLAKNGETIENFVPKEGVKKADKFIVIERKKKNINTTPVDISIIDSVTDRTYPAALQLANKGFTENKPDAVVTKRNPQKIHIDLPGMGDKATVEVNDPTYANVSTAIDNLVNQWHDNYSGGNTLPARTQYTESMVYSKSQIEAALNVNSKILDGTLGIDFKSISKGEKKVMIAAYKQIFYTVSANLPNNPADVFDKSVTFKDLQRKGVSNEAPPLFVSNVAYGRTVFVKLETSSKSNDVEAAFSAALKGTDVKTNGKYSDILENSSFTAVVLGGDAAEHNKVVTKDFDVIRNVIKDNATFSRKNPAYPISYTSVFLKNNKIAGVNNRTEYVETTSTEYTSGKINLSHQGAYVAQYEILWDEINYDDKGKEVITKRRWDNNWYSKTSPFSTVIPLGANSRNIRIMARECTGLAWEWWRKVIDERDVKLSKEINVNISGSTLSPYGSITYK.

The N-terminal stretch at 1-33 (MSNKKTFKKYSRVAGLLTVALIIGNLVTANAES) is a signal peptide. 2 disordered regions span residues 32–56 (ESNKQNTASTETTTTNEQPKPESSE) and 81–108 (KEMPLESAEKEEKKSEDKKKSEEDHTEE). Residues 37–48 (NTASTETTTTNE) are compositionally biased toward low complexity. 4 beta stranded membrane-spanning segments follow: residues 260 to 273 (KSQIEAALNVNSKI), 280 to 289 (IDFKSISKGE), 358 to 367 (SNDVEAAFSA), and 375 to 387 (KTNGKYSDILENS). The Conserved undecapeptide motif lies at 529–539 (ECTGLAWEWWR). Residue Thr561 is a short sequence motif, cholesterol binding.

The protein belongs to the cholesterol-dependent cytolysin family. Homooligomeric pore complex of 35 to 50 subunits; when inserted in the host membrane.

It localises to the secreted. The protein resides in the host cell membrane. Its function is as follows. A cholesterol-dependent toxin that causes cytolysis by forming pores in cholesterol containing host membranes. After binding to target membranes, the protein undergoes a major conformation change, leading to its insertion in the host membrane and formation of an oligomeric pore complex. Cholesterol is required for binding to host membranes, membrane insertion and pore formation; cholesterol binding is mediated by a Thr-Leu pair in the C-terminus. Can be reversibly inactivated by oxidation. The chain is Streptolysin O (slo) from Streptococcus pyogenes serotype M6 (strain ATCC BAA-946 / MGAS10394).